A 505-amino-acid chain; its full sequence is Protein nucleotidyltransferase YdiU (505 aa).

Positions 102, 104, 105, 125, 137, 138, 188, and 195 each coordinate ATP. Asp264 serves as the catalytic Proton acceptor. 2 residues coordinate Mg(2+): Asn265 and Asp274. Position 274 (Asp274) interacts with ATP. The segment at 485–505 (FADYGKPPAPGEEVQQTFCGT) is disordered.

Belongs to the SELO family. Mg(2+) serves as cofactor. Requires Mn(2+) as cofactor.

The catalysed reaction is L-seryl-[protein] + ATP = 3-O-(5'-adenylyl)-L-seryl-[protein] + diphosphate. It catalyses the reaction L-threonyl-[protein] + ATP = 3-O-(5'-adenylyl)-L-threonyl-[protein] + diphosphate. It carries out the reaction L-tyrosyl-[protein] + ATP = O-(5'-adenylyl)-L-tyrosyl-[protein] + diphosphate. The enzyme catalyses L-histidyl-[protein] + UTP = N(tele)-(5'-uridylyl)-L-histidyl-[protein] + diphosphate. The catalysed reaction is L-seryl-[protein] + UTP = O-(5'-uridylyl)-L-seryl-[protein] + diphosphate. It catalyses the reaction L-tyrosyl-[protein] + UTP = O-(5'-uridylyl)-L-tyrosyl-[protein] + diphosphate. Functionally, nucleotidyltransferase involved in the post-translational modification of proteins. It can catalyze the addition of adenosine monophosphate (AMP) or uridine monophosphate (UMP) to a protein, resulting in modifications known as AMPylation and UMPylation. The sequence is that of Protein nucleotidyltransferase YdiU from Nitrobacter hamburgensis (strain DSM 10229 / NCIMB 13809 / X14).